Consider the following 190-residue polypeptide: NADH-quinone oxidoreductase subunit B (190 aa).

Residues Cys-39, Cys-40, Cys-104, and Cys-135 each coordinate [4Fe-4S] cluster.

The protein belongs to the complex I 20 kDa subunit family. As to quaternary structure, NDH-1 is composed of 14 different subunits. Subunits NuoB, C, D, E, F, and G constitute the peripheral sector of the complex. [4Fe-4S] cluster is required as a cofactor.

The protein localises to the cell inner membrane. It catalyses the reaction a quinone + NADH + 5 H(+)(in) = a quinol + NAD(+) + 4 H(+)(out). Functionally, NDH-1 shuttles electrons from NADH, via FMN and iron-sulfur (Fe-S) centers, to quinones in the respiratory chain. The immediate electron acceptor for the enzyme in this species is believed to be a menaquinone. Couples the redox reaction to proton translocation (for every two electrons transferred, four hydrogen ions are translocated across the cytoplasmic membrane), and thus conserves the redox energy in a proton gradient. The polypeptide is NADH-quinone oxidoreductase subunit B (Chlorobium phaeobacteroides (strain BS1)).